Consider the following 126-residue polypeptide: NADP-reducing hydrogenase subunit HndB (126 aa).

In terms of assembly, heterotetramer composed of HndA, HndB, HndC and HndD subunits. HndA and HndB could form a heterodimeric intermediate in the electron transfer between the active site of hydrogenase subunit HndD and the NADP reduction site of the reducing subunit HndC.

It catalyses the reaction H2 + NADP(+) = NADPH + H(+). With respect to regulation, inhibited by oxygen. Its function is as follows. Catalyzes the reduction of NADP in the presence of molecular H2 to yield NADPH. The sequence is that of NADP-reducing hydrogenase subunit HndB (hndB) from Solidesulfovibrio fructosivorans (Desulfovibrio fructosivorans).